We begin with the raw amino-acid sequence, 398 residues long: Phosphoglycerate kinase (398 aa).

Residues 21–23 (DFN), Arg36, 59–62 (HLGR), Arg119, and Arg157 contribute to the substrate site. ATP is bound by residues Lys208, Gly296, Glu327, and 354–357 (GGDS).

Belongs to the phosphoglycerate kinase family. Monomer.

The protein localises to the cytoplasm. It carries out the reaction (2R)-3-phosphoglycerate + ATP = (2R)-3-phospho-glyceroyl phosphate + ADP. The protein operates within carbohydrate degradation; glycolysis; pyruvate from D-glyceraldehyde 3-phosphate: step 2/5. This is Phosphoglycerate kinase from Streptococcus agalactiae serotype Ia (strain ATCC 27591 / A909 / CDC SS700).